The following is a 477-amino-acid chain: MKNLPILLLLCVAACSAYPLDRSARDEDSNMDLLQDYLEKYYDLGKEMRQYVRRKDSGPIVKKIQEMQKFLGLKVTGKLDSDTVEVMHKSRCGVPDVGHFTTFPGMPKWSKTHLTYRIVNYTQDLPRDAVDSDVEKALKIWEEVTPLTFSRIYEGEADIMITFAVREHGDFFPFDGPGKVLAHAYPPGPGMNGDAHFDDDEHWTKDASGINFLLVAAHELGHSLGLYHSTNTEALMYPLYNTLKGPARVRLSQDDVTGIQSLYGPPPASPDSPVEPSEPEPPAPGTLAMCDPALSFDAISTLRGEILFFKDRYFWRKTFRTLVPEFHPISSFWPSLPSGIDAAYEVTSRDSVFIFKGNKFWAIRGNEEQAGYPRGIHTLGFPPTVRKIDAAIFDKEKQKTYFFVEDKYWRFDEKRQSMEPGYPKQIAEDFPGIDSKLDAAFESFGFFYFFSGSSQFEFDPNAKKVTHVLKSNSWFNC.

Residues 1-17 form the signal peptide; it reads MKNLPILLLLCVAACSA. The propeptide at 18 to 99 is activation peptide; sequence YPLDRSARDE…SRCGVPDVGH (82 aa). The Cysteine switch signature appears at 90 to 97; sequence SRCGVPDV. Cysteine 92 provides a ligand contact to Zn(2+). The N-linked (GlcNAc...) asparagine glycan is linked to asparagine 120. Aspartate 124 and aspartate 158 together coordinate Ca(2+). 2 residues coordinate Zn(2+): histidine 168 and aspartate 170. 4 residues coordinate Ca(2+): aspartate 175, glycine 176, glycine 178, and valine 180. Histidine 183 provides a ligand contact to Zn(2+). 3 residues coordinate Ca(2+): glycine 190, asparagine 192, and aspartate 194. Residue histidine 196 coordinates Zn(2+). Residues aspartate 198, aspartate 199, and glutamate 201 each contribute to the Ca(2+) site. Histidine 218 contributes to the Zn(2+) binding site. Residue glutamate 219 is part of the active site. Zn(2+) contacts are provided by histidine 222 and histidine 228. The segment at 260 to 285 is disordered; the sequence is QSLYGPPPASPDSPVEPSEPEPPAPG. Hemopexin repeat units follow at residues 287 to 336, 337 to 383, 385 to 433, and 434 to 477; these read LAMC…WPSL, PSGI…GFPP, VRKI…FPGI, and DSKL…WFNC. Cysteines 290 and 477 form a disulfide. Residue aspartate 297 coordinates Ca(2+). Ca(2+)-binding residues include aspartate 389 and aspartate 438.

Belongs to the peptidase M10A family. It depends on Ca(2+) as a cofactor. Requires Zn(2+) as cofactor.

It localises to the secreted. The protein localises to the extracellular space. The protein resides in the extracellular matrix. It carries out the reaction Preferential cleavage where P1', P2' and P3' are hydrophobic residues.. Functionally, metalloproteinase with a rather broad substrate specificity that can degrade fibronectin, laminin, gelatins of type I, III, IV, and V; collagens III, IV, X, and IX, and cartilage proteoglycans. Activates different molecules including growth factors, plasminogen or other matrix metalloproteinases such as MMP9. Once released into the extracellular matrix (ECM), the inactive pro-enzyme is activated by the plasmin cascade signaling pathway. Also acts intracellularly. For example, in dopaminergic neurons, gets activated by the serine protease HTRA2 upon stress and plays a pivotal role in DA neuronal degeneration by mediating microglial activation and alpha-synuclein/SNCA cleavage. In addition, plays a role in immune response and possesses antiviral activity against various viruses. Mechanistically, translocates from the cytoplasm into the cell nucleus upon virus infection to influence NF-kappa-B activities. This Equus caballus (Horse) protein is Stromelysin-1 (MMP3).